The chain runs to 390 residues: Large ribosomal subunit protein uL3y (390 aa).

Residues 1 to 36 (MSHRKFEHPRHGSLGFLPRKRASRHRGKVKAFPKDD) form a disordered region. Basic residues predominate over residues 18-31 (PRKRASRHRGKVKA).

The protein belongs to the universal ribosomal protein uL3 family.

It localises to the cytoplasm. The chain is Large ribosomal subunit protein uL3y (ARP2) from Arabidopsis thaliana (Mouse-ear cress).